The following is a 343-amino-acid chain: Zinc finger CCCH domain-containing protein 39 (343 aa).

Residues 114-147 (LSHLADAADEAAALRQENAELRVANNDLACRIAK) are a coiled coil. 2 consecutive C3H1-type zinc fingers follow at residues 268 to 296 (MFKT…HGVA) and 306 to 334 (RYKT…HSIT).

This is Zinc finger CCCH domain-containing protein 39 from Oryza sativa subsp. japonica (Rice).